A 410-amino-acid chain; its full sequence is LL-diaminopimelate aminotransferase (410 aa).

Residues tyrosine 15 and glycine 42 each coordinate substrate. Pyridoxal 5'-phosphate contacts are provided by residues tyrosine 72, 108–109, tyrosine 132, asparagine 188, tyrosine 219, and 247–249; these read AK and SFS. Lysine 109, tyrosine 132, and asparagine 188 together coordinate substrate. Residue lysine 250 is modified to N6-(pyridoxal phosphate)lysine. Residues arginine 258 and asparagine 293 each contribute to the pyridoxal 5'-phosphate site. Asparagine 293 and arginine 389 together coordinate substrate.

It belongs to the class-I pyridoxal-phosphate-dependent aminotransferase family. LL-diaminopimelate aminotransferase subfamily. As to quaternary structure, homodimer. Requires pyridoxal 5'-phosphate as cofactor.

The enzyme catalyses (2S,6S)-2,6-diaminopimelate + 2-oxoglutarate = (S)-2,3,4,5-tetrahydrodipicolinate + L-glutamate + H2O + H(+). Its pathway is amino-acid biosynthesis; L-lysine biosynthesis via DAP pathway; LL-2,6-diaminopimelate from (S)-tetrahydrodipicolinate (aminotransferase route): step 1/1. Involved in the synthesis of meso-diaminopimelate (m-DAP or DL-DAP), required for both lysine and peptidoglycan biosynthesis. Catalyzes the direct conversion of tetrahydrodipicolinate to LL-diaminopimelate. Can also use m-DAP instead of LL-DAP as the amino-group donor. In Bacteroides fragilis (strain ATCC 25285 / DSM 2151 / CCUG 4856 / JCM 11019 / LMG 10263 / NCTC 9343 / Onslow / VPI 2553 / EN-2), this protein is LL-diaminopimelate aminotransferase.